The sequence spans 228 residues: 2-C-methyl-D-erythritol 4-phosphate cytidylyltransferase (228 aa).

Belongs to the IspD/TarI cytidylyltransferase family. IspD subfamily.

The enzyme catalyses 2-C-methyl-D-erythritol 4-phosphate + CTP + H(+) = 4-CDP-2-C-methyl-D-erythritol + diphosphate. It functions in the pathway isoprenoid biosynthesis; isopentenyl diphosphate biosynthesis via DXP pathway; isopentenyl diphosphate from 1-deoxy-D-xylulose 5-phosphate: step 2/6. Catalyzes the formation of 4-diphosphocytidyl-2-C-methyl-D-erythritol from CTP and 2-C-methyl-D-erythritol 4-phosphate (MEP). This chain is 2-C-methyl-D-erythritol 4-phosphate cytidylyltransferase, found in Trichormus variabilis (strain ATCC 29413 / PCC 7937) (Anabaena variabilis).